Reading from the N-terminus, the 352-residue chain is 4-hydroxy-2-oxovalerate aldolase (352 aa).

In terms of domain architecture, Pyruvate carboxyltransferase spans 13–265 (VRLTDTSLRD…KTGIDFFDIA (253 aa)). Position 21 to 22 (21 to 22 (RD)) interacts with substrate. Asp22 contributes to the Mn(2+) binding site. The active-site Proton acceptor is His25. 2 residues coordinate substrate: Ser175 and His204. The Mn(2+) site is built by His204 and His206. Tyr295 provides a ligand contact to substrate.

Belongs to the 4-hydroxy-2-oxovalerate aldolase family.

It catalyses the reaction (S)-4-hydroxy-2-oxopentanoate = acetaldehyde + pyruvate. The polypeptide is 4-hydroxy-2-oxovalerate aldolase (Mycobacterium avium (strain 104)).